Consider the following 226-residue polypeptide: Transmembrane gamma-carboxyglutamic acid protein 4 (226 aa).

An N-terminal signal peptide occupies residues 1–17 (MFTLLVLLSQLPTVTLG). Residues 18-49 (FPHCARGPKASKHAGEEVFTSKEEANFFIHRR) constitute a propeptide that is removed on maturation. The Extracellular segment spans residues 50 to 113 (LLYNRFDLEL…KSDGNREKID (64 aa)). A Gla domain is found at 52–98 (YNRFDLELFTPGNLERECNEELCNYEEAREIFVDEDKTIAFWQEYSA). A disulfide bond links cysteine 69 and cysteine 74. Glutamate 72 is modified (4-carboxyglutamate). Residues 114 to 134 (VMGLLTGLIAAGVFLVIFGLL) form a helical membrane-spanning segment. Residues 135-226 (GYYLCITKCN…FKKSMSLPSH (92 aa)) lie on the Cytoplasmic side of the membrane. The residue at position 163 (serine 163) is a Phosphoserine. Residues 186 to 189 (LPSY) carry the LPXY motif; mediates binding to WW domain-containing proteins motif. The short motif at 204-207 (PPPY) is the PPXY motif; mediates binding to WW domain-containing proteins element.

It belongs to the commissureless family. Interacts (via cytoplasmic domain) with WW domain-containing proteins MAGI1, MAGI3, NEDD4, NEDD4L, WWTR1/TAZ and YAP1. Gamma-carboxyglutamate residues are formed by vitamin K dependent carboxylation. These residues are essential for the binding of calcium. As to expression, widely expressed with highest levels in kidney.

The protein resides in the endoplasmic reticulum-Golgi intermediate compartment membrane. The protein localises to the cell membrane. In terms of biological role, may control axon guidance across the CNS. Prevents the delivery of ROBO1 at the cell surface and down-regulates its expression. This is Transmembrane gamma-carboxyglutamic acid protein 4 from Homo sapiens (Human).